Here is a 563-residue protein sequence, read N- to C-terminus: Phospholipase B-like protein F (563 aa).

The signal sequence occupies residues 1–21 (MKIINSFVFIFVLLFVFNTNA). N85, N107, N118, N121, N208, N312, and N537 each carry an N-linked (GlcNAc...) asparagine glycan.

Belongs to the phospholipase B-like family.

The protein localises to the secreted. Probable phospholipase. The sequence is that of Phospholipase B-like protein F (plbF) from Dictyostelium discoideum (Social amoeba).